A 671-amino-acid polypeptide reads, in one-letter code: UvrABC system protein C (671 aa).

In terms of domain architecture, GIY-YIG spans 16–95 (VEPGVYRFRD…IKEFDPRFNV (80 aa)). A UVR domain is found at 208-243 (DRLARDMEREMNQAAQELNFERAARLRDNISALQRA). Residues 645–671 (SSAPSSGATEAVLPAMVENGVDDTPST) form a disordered region.

Belongs to the UvrC family. In terms of assembly, interacts with UvrB in an incision complex.

The protein resides in the cytoplasm. Functionally, the UvrABC repair system catalyzes the recognition and processing of DNA lesions. UvrC both incises the 5' and 3' sides of the lesion. The N-terminal half is responsible for the 3' incision and the C-terminal half is responsible for the 5' incision. The chain is UvrABC system protein C from Mycobacteroides abscessus (strain ATCC 19977 / DSM 44196 / CCUG 20993 / CIP 104536 / JCM 13569 / NCTC 13031 / TMC 1543 / L948) (Mycobacterium abscessus).